Consider the following 266-residue polypeptide: Thymidylate synthase (266 aa).

DUMP contacts are provided by residues Arg-20 and 129–130 (RR). The active-site Nucleophile is the Cys-149. DUMP-binding positions include 169 to 172 (RSCD), Asn-180, and 210 to 212 (HVY). Asp-172 lines the (6R)-5,10-methylene-5,6,7,8-tetrahydrofolate pocket. A (6R)-5,10-methylene-5,6,7,8-tetrahydrofolate-binding site is contributed by Ala-265.

The protein belongs to the thymidylate synthase family. Bacterial-type ThyA subfamily. As to quaternary structure, homodimer.

The protein resides in the cytoplasm. The catalysed reaction is dUMP + (6R)-5,10-methylene-5,6,7,8-tetrahydrofolate = 7,8-dihydrofolate + dTMP. Its pathway is pyrimidine metabolism; dTTP biosynthesis. Functionally, catalyzes the reductive methylation of 2'-deoxyuridine-5'-monophosphate (dUMP) to 2'-deoxythymidine-5'-monophosphate (dTMP) while utilizing 5,10-methylenetetrahydrofolate (mTHF) as the methyl donor and reductant in the reaction, yielding dihydrofolate (DHF) as a by-product. This enzymatic reaction provides an intracellular de novo source of dTMP, an essential precursor for DNA biosynthesis. This Bifidobacterium longum (strain NCC 2705) protein is Thymidylate synthase.